Here is a 525-residue protein sequence, read N- to C-terminus: Lysine--tRNA ligase (525 aa).

Residues Glu430 and Glu437 each coordinate Mg(2+).

It belongs to the class-II aminoacyl-tRNA synthetase family. Homodimer. Requires Mg(2+) as cofactor.

Its subcellular location is the cytoplasm. The enzyme catalyses tRNA(Lys) + L-lysine + ATP = L-lysyl-tRNA(Lys) + AMP + diphosphate. The sequence is that of Lysine--tRNA ligase from Chlamydia caviae (strain ATCC VR-813 / DSM 19441 / 03DC25 / GPIC) (Chlamydophila caviae).